The chain runs to 181 residues: Ribosome maturation factor RimM (181 aa).

In terms of domain architecture, PRC barrel spans 98-172 (EDEFYFEDLI…RIVIPELSLW (75 aa)).

Belongs to the RimM family. In terms of assembly, binds ribosomal protein uS19.

It is found in the cytoplasm. Its function is as follows. An accessory protein needed during the final step in the assembly of 30S ribosomal subunit, possibly for assembly of the head region. Essential for efficient processing of 16S rRNA. May be needed both before and after RbfA during the maturation of 16S rRNA. It has affinity for free ribosomal 30S subunits but not for 70S ribosomes. The chain is Ribosome maturation factor RimM from Hyphomonas neptunium (strain ATCC 15444).